Consider the following 660-residue polypeptide: Acetyl-coenzyme A synthetase (660 aa).

Residues 197-200 and threonine 317 contribute to the CoA site; that span reads RGGK. Residues 397–399, 421–426, aspartate 512, and arginine 528 each bind ATP; these read GEP and DTFWQT. Serine 536 contributes to the CoA binding site. Arginine 539 is an ATP binding site. Valine 550 and valine 555 together coordinate Mg(2+). The residue at position 625 (lysine 625) is an N6-acetyllysine.

The protein belongs to the ATP-dependent AMP-binding enzyme family. Mg(2+) is required as a cofactor. In terms of processing, acetylated. Deacetylation by the SIR2-homolog deacetylase activates the enzyme.

The enzyme catalyses acetate + ATP + CoA = acetyl-CoA + AMP + diphosphate. The protein operates within ketone degradation; acetoin degradation. In terms of biological role, catalyzes the conversion of acetate into acetyl-CoA (AcCoA), an essential intermediate at the junction of anabolic and catabolic pathways. AcsA undergoes a two-step reaction. In the first half reaction, AcsA combines acetate with ATP to form acetyl-adenylate (AcAMP) intermediate. In the second half reaction, it can then transfer the acetyl group from AcAMP to the sulfhydryl group of CoA, forming the product AcCoA. Although acetate is the preferred substrate of AcsA, propionate is also used, but at a diminished rate compared with that of acetate. Fatty acids with more than three carbon atoms are usually not accepted as substrates by AcsA. In Cupriavidus necator (strain ATCC 17699 / DSM 428 / KCTC 22496 / NCIMB 10442 / H16 / Stanier 337) (Ralstonia eutropha), this protein is Acetyl-coenzyme A synthetase.